The following is a 239-amino-acid chain: Acidic leucine-rich nuclear phosphoprotein 32 family member B (239 aa).

4 LRR repeats span residues 16–40 (AADAKELVLDNCRSDDGKIIGLTSE), 43–64 (SLEFLSMINVNLLSVANLPKLP), 65–87 (KLKKLELSDNRISGGLEVLAERT), and 89–110 (NLTHLNLSGNKIKEINTLEPLK). Residues 123 to 165 (CEVTMLNNYRESVFELLPKLTFLDGFDADDQEAPDSDPEAEDL) form the LRRCT domain. Residues 149-215 (DADDQEAPDS…EEDEDDEDVP (67 aa)) are compositionally biased toward acidic residues. Residues 149–239 (DADDQEAPDS…EEEEDDEDDE (91 aa)) are disordered. Basic and acidic residues predominate over residues 216-225 (QGEKRKRDLS). The segment covering 226 to 239 (DEGEEEEEDDEDDE) has biased composition (acidic residues).

It belongs to the ANP32 family.

It is found in the nucleus. Its function is as follows. Multifunctional protein working as a cell cycle progression factor as well as a cell survival factor. Required for the progression from the G1 to the S phase. Anti-apoptotic protein which functions as a caspase-3 inhibitor. Has no phosphatase 2A (PP2A) inhibitor activity. Exhibits histone chaperone properties, stimulating core histones to assemble into a nucleosome. The sequence is that of Acidic leucine-rich nuclear phosphoprotein 32 family member B (anp32b) from Xenopus laevis (African clawed frog).